Consider the following 543-residue polypeptide: CTP synthase (543 aa).

The amidoligase domain stretch occupies residues 1–265 (MTRYIFVTGG…DDIVVERFGL (265 aa)). A CTP-binding site is contributed by Ser13. A UTP-binding site is contributed by Ser13. Residues 14–19 (SLGKGI) and Asp71 contribute to the ATP site. Residues Asp71 and Glu139 each coordinate Mg(2+). Residues 146 to 148 (DIE), 186 to 191 (KTKPTQ), and Lys222 contribute to the CTP site. UTP-binding positions include 186–191 (KTKPTQ) and Lys222. Residues 290 to 541 (TIAMVGKYME…VNAALAQKAR (252 aa)) form the Glutamine amidotransferase type-1 domain. Position 351 (Gly351) interacts with L-glutamine. Cys378 serves as the catalytic Nucleophile; for glutamine hydrolysis. L-glutamine contacts are provided by residues 379–382 (LGMQ), Glu402, and Arg469. Residues His514 and Glu516 contribute to the active site.

Belongs to the CTP synthase family. In terms of assembly, homotetramer.

The catalysed reaction is UTP + L-glutamine + ATP + H2O = CTP + L-glutamate + ADP + phosphate + 2 H(+). It carries out the reaction L-glutamine + H2O = L-glutamate + NH4(+). The enzyme catalyses UTP + NH4(+) + ATP = CTP + ADP + phosphate + 2 H(+). Its pathway is pyrimidine metabolism; CTP biosynthesis via de novo pathway; CTP from UDP: step 2/2. Allosterically activated by GTP, when glutamine is the substrate; GTP has no effect on the reaction when ammonia is the substrate. The allosteric effector GTP functions by stabilizing the protein conformation that binds the tetrahedral intermediate(s) formed during glutamine hydrolysis. Inhibited by the product CTP, via allosteric rather than competitive inhibition. Its function is as follows. Catalyzes the ATP-dependent amination of UTP to CTP with either L-glutamine or ammonia as the source of nitrogen. Regulates intracellular CTP levels through interactions with the four ribonucleotide triphosphates. This Azotobacter vinelandii (strain DJ / ATCC BAA-1303) protein is CTP synthase.